The sequence spans 218 residues: Probable transaldolase (218 aa).

Lys-87 serves as the catalytic Schiff-base intermediate with substrate.

Belongs to the transaldolase family. Type 3B subfamily.

It is found in the cytoplasm. The enzyme catalyses D-sedoheptulose 7-phosphate + D-glyceraldehyde 3-phosphate = D-erythrose 4-phosphate + beta-D-fructose 6-phosphate. Its pathway is carbohydrate degradation; pentose phosphate pathway; D-glyceraldehyde 3-phosphate and beta-D-fructose 6-phosphate from D-ribose 5-phosphate and D-xylulose 5-phosphate (non-oxidative stage): step 2/3. Transaldolase is important for the balance of metabolites in the pentose-phosphate pathway. This Parabacteroides distasonis (strain ATCC 8503 / DSM 20701 / CIP 104284 / JCM 5825 / NCTC 11152) protein is Probable transaldolase.